The sequence spans 391 residues: PPE family protein PPE18 (391 aa).

It belongs to the mycobacterial PPE family. Interacts with human TLR2.

Its subcellular location is the secreted. The protein localises to the cell wall. The protein resides in the cell surface. Functionally, could be a crucial virulence factor for intracellular survival of M.tuberculosis. Favors development of Th2-type response, and down-regulates the pro-inflammatory and Th1-type response. Specifically interacts with the human Toll-like receptor 2 (TLR2), leading to an early and sustained activation of p38 MAPK, which induces IL-10 production and activates Th2-type immune response. Also inhibits pro-inflammatory cytokines IL-12p40 and TNF-alpha production. Acts by up-regulating the expression as well as tyrosine phosphorylation of suppressor of cytokine signaling 3 (SOCS-3), leading to the inhibition of phosphorylation of I-kappa-B-alpha, thereby preventing nuclear translocation of the NF-kappa-B/REL subunits and expression of NF-kappa-B regulated genes like IL-12 and TNF-alpha. Induction of SOCS-3 probably depends on the activation of p38 MAPK. The protein is PPE family protein PPE18 of Mycobacterium tuberculosis (strain ATCC 25618 / H37Rv).